The following is a 510-amino-acid chain: MKLAHWMYAGPAHIGTLRVASSFKNVHAIMHAPLGDDYFNVMRSMLERERNFTPATASIVDRHVLARGSRKRVVDNILRKDKEESPDLIILTPTCTSSILQEDLKNFVDRASIISDCNVIFADVDHYQVNEIQAADRTLEQVVRYYLDKSHTLDQFVTDAPSVNIIGILTLGFHNRHDCRELRRLLKDLDIRINQIIPEGGSVEDPKNLPKARFNLIPYREVGLMTAMYLNKEFGMPYVSTTPMGAVDMAECIRQIKKSLDILAAPILSSKRVDYESYIDGQTRFVSQAAWFSRSIDCQNFTGKETVVFGDATHAASITKILAREMGIRVSCTGTYCKHDAEWFKEQIKDFCDEMIITDDHAEVGDIIARVEPSAIFGTQMERHIGKRLEIPCGVISAPAHIQNFSLGYRPFLGYEGTNQIADLVYNSFALGMEDHLLEIFCGHDTKEIMTKSLSTDISPIWDPESRQELGKIPRFVRDEVKINTEKFARQKGLLNVTVEVMHAAKEALS.

D36 contributes to the [4Fe-4S] cluster binding site. The active-site Proton donor is D297. Residue 432–433 (GM) participates in substrate binding.

The protein belongs to the ChlB/BchB/BchZ family. As to quaternary structure, protochlorophyllide reductase is composed of three subunits; ChlL, ChlN and ChlB. Forms a heterotetramer of two ChlB and two ChlN subunits. [4Fe-4S] cluster is required as a cofactor.

It localises to the plastid. Its subcellular location is the chloroplast. It carries out the reaction chlorophyllide a + oxidized 2[4Fe-4S]-[ferredoxin] + 2 ADP + 2 phosphate = protochlorophyllide a + reduced 2[4Fe-4S]-[ferredoxin] + 2 ATP + 2 H2O. Its pathway is porphyrin-containing compound metabolism; chlorophyll biosynthesis (light-independent). Its function is as follows. Component of the dark-operative protochlorophyllide reductase (DPOR) that uses Mg-ATP and reduced ferredoxin to reduce ring D of protochlorophyllide (Pchlide) to form chlorophyllide a (Chlide). This reaction is light-independent. The NB-protein (ChlN-ChlB) is the catalytic component of the complex. The chain is Light-independent protochlorophyllide reductase subunit B from Pinus koraiensis (Korean pine).